Consider the following 467-residue polypeptide: ATP synthase subunit beta (467 aa).

157-164 (GGAGVGKT) contributes to the ATP binding site.

This sequence belongs to the ATPase alpha/beta chains family. In terms of assembly, F-type ATPases have 2 components, CF(1) - the catalytic core - and CF(0) - the membrane proton channel. CF(1) has five subunits: alpha(3), beta(3), gamma(1), delta(1), epsilon(1). CF(0) has three main subunits: a(1), b(2) and c(9-12). The alpha and beta chains form an alternating ring which encloses part of the gamma chain. CF(1) is attached to CF(0) by a central stalk formed by the gamma and epsilon chains, while a peripheral stalk is formed by the delta and b chains.

The protein resides in the cell inner membrane. It catalyses the reaction ATP + H2O + 4 H(+)(in) = ADP + phosphate + 5 H(+)(out). Produces ATP from ADP in the presence of a proton gradient across the membrane. The catalytic sites are hosted primarily by the beta subunits. The protein is ATP synthase subunit beta of Desulfosudis oleivorans (strain DSM 6200 / JCM 39069 / Hxd3) (Desulfococcus oleovorans).